The sequence spans 236 residues: MIRAELDKDPRDVAAMFDSIADRYDLLNRVLSLGRERYWRQATVAAVDAYSGELVLDLAAGTGTSSESFTRRGARVIACDFSFGMLRVGAERRGGASRKGVTVVAGDALHLPFADQTFDAVTISFGLRNVHDVDRALAELLRVTKVGGRLVICEFSHLPVQPLDRMLGWGMKIGLPWVARQFSDNPDAYAYLSESIAAWPDQAGLARKISAAGWSRVAWRNLTFGVVALHRAYRER.

Residues Thr62, Asp80, 107–108 (DA), and Ser124 each bind S-adenosyl-L-methionine.

Belongs to the class I-like SAM-binding methyltransferase superfamily. MenG/UbiE family.

The enzyme catalyses a 2-demethylmenaquinol + S-adenosyl-L-methionine = a menaquinol + S-adenosyl-L-homocysteine + H(+). It participates in quinol/quinone metabolism; menaquinone biosynthesis; menaquinol from 1,4-dihydroxy-2-naphthoate: step 2/2. Its function is as follows. Methyltransferase required for the conversion of demethylmenaquinol (DMKH2) to menaquinol (MKH2). The polypeptide is Demethylmenaquinone methyltransferase (Thermobifida fusca (strain YX)).